Here is a 463-residue protein sequence, read N- to C-terminus: MTTETRSLYSQLPAIDRLLRDSSFLSLRDTYGHTRVVELLRQMLDEAREVIRDSQTLPAWCENWAQEVDARLTKEAQSALRPVINLTGTVLHTNLGRALQAEAAVEAVAQAMRSPVTLEYDLDDAGRGHRDRALAQLLCRITGAEDACIVNNNAAAVLLMLAATASGKEVVVSRGELVEIGGAFRIPDVMRQAGCTLHEVGTTNRTHANDYRQAVNENTALLMKVHTSNYSIQGFTKAIDEAELVALGKELDIPVVTDLGSGSLVDLSQYGLPKEPMPQELIAAGVSLVSFSGDKLLGGPQAGIIVGKKEMIARLQSHPLKRALRADKMTLAALEATVRLYLHPEALSEKLPTLRLLTRSAEVIQIQAQRLQAPLAAHYGAEFAVQVMPCLSQIGSGSLPVDRLPSAALTFTPHDGRGSHLESLAARWRELPVPVIGRIYDGRLWLDLRCLEDEQRFLEMLLK.

Position 295 is an N6-(pyridoxal phosphate)lysine (K295).

Belongs to the SelA family. In terms of assembly, homodecamer; pentamer of dimers. Binds only one seryl-tRNA(Sec) per dimer. Pyridoxal 5'-phosphate is required as a cofactor.

It is found in the cytoplasm. The catalysed reaction is L-seryl-tRNA(Sec) + selenophosphate + H(+) = L-selenocysteinyl-tRNA(Sec) + phosphate. The protein operates within aminoacyl-tRNA biosynthesis; selenocysteinyl-tRNA(Sec) biosynthesis; selenocysteinyl-tRNA(Sec) from L-seryl-tRNA(Sec) (bacterial route): step 1/1. In terms of biological role, converts seryl-tRNA(Sec) to selenocysteinyl-tRNA(Sec) required for selenoprotein biosynthesis. This Escherichia coli O17:K52:H18 (strain UMN026 / ExPEC) protein is L-seryl-tRNA(Sec) selenium transferase.